Consider the following 389-residue polypeptide: Transcription factor MYB97 (389 aa).

HTH myb-type domains follow at residues 16 to 68 (GVVL…ANHL) and 69 to 123 (RPNL…KRFQ). DNA-binding regions (H-T-H motif) lie at residues 44 to 68 (WNSV…ANHL) and 96 to 119 (WARM…NTRL). A disordered region spans residues 131-159 (PPEYSQNNHQQQMYPQQPSSPLPSQTPAS). Residues 140–159 (QQQMYPQQPSSPLPSQTPAS) are compositionally biased toward low complexity.

Accumulates in pollen grains and pollen tube. Mostly expressed in mature pollen grains, and, to a lower extent, in inflorescences and siliques.

It is found in the nucleus. In terms of biological role, transcription activator. Binds to 5'-CAACTGTC-3' and/or 5'-TAACAAA-3' motif in target gene promoter to promote their expression. Together with MYB101 and MYB120, functions as a male factor that controls pollen tube-synergid interaction in fertilization. Required for pollen tube growth arrest and sperm cell release in the female gametophyte, probably via the regulation of pollen tube-specific gene expression. This chain is Transcription factor MYB97, found in Arabidopsis thaliana (Mouse-ear cress).